Here is a 314-residue protein sequence, read N- to C-terminus: tRNA dimethylallyltransferase (314 aa).

11 to 18 (GPTGSGKT) contributes to the ATP binding site. 13 to 18 (TGSGKT) is a substrate binding site. The interval 36–39 (DSMQ) is interaction with substrate tRNA.

Belongs to the IPP transferase family. As to quaternary structure, monomer. The cofactor is Mg(2+).

It carries out the reaction adenosine(37) in tRNA + dimethylallyl diphosphate = N(6)-dimethylallyladenosine(37) in tRNA + diphosphate. Its function is as follows. Catalyzes the transfer of a dimethylallyl group onto the adenine at position 37 in tRNAs that read codons beginning with uridine, leading to the formation of N6-(dimethylallyl)adenosine (i(6)A). This Chlamydia trachomatis serovar D (strain ATCC VR-885 / DSM 19411 / UW-3/Cx) protein is tRNA dimethylallyltransferase.